A 212-amino-acid polypeptide reads, in one-letter code: Pyridoxine/pyridoxamine 5'-phosphate oxidase (212 aa).

FMN is bound by residues 59–64, 74–75, K81, and Q103; these read RMVLMK and YS. K64 is a substrate binding site. Substrate contacts are provided by Y121 and R125. FMN-binding positions include 138–139 and W183; that span reads QS. 189–191 lines the substrate pocket; that stretch reads RLH. R193 lines the FMN pocket.

Belongs to the pyridoxamine 5'-phosphate oxidase family. In terms of assembly, homodimer. The cofactor is FMN.

The enzyme catalyses pyridoxamine 5'-phosphate + O2 + H2O = pyridoxal 5'-phosphate + H2O2 + NH4(+). It catalyses the reaction pyridoxine 5'-phosphate + O2 = pyridoxal 5'-phosphate + H2O2. Its pathway is cofactor metabolism; pyridoxal 5'-phosphate salvage; pyridoxal 5'-phosphate from pyridoxamine 5'-phosphate: step 1/1. The protein operates within cofactor metabolism; pyridoxal 5'-phosphate salvage; pyridoxal 5'-phosphate from pyridoxine 5'-phosphate: step 1/1. Functionally, catalyzes the oxidation of either pyridoxine 5'-phosphate (PNP) or pyridoxamine 5'-phosphate (PMP) into pyridoxal 5'-phosphate (PLP). This Rhodopseudomonas palustris (strain HaA2) protein is Pyridoxine/pyridoxamine 5'-phosphate oxidase.